The primary structure comprises 141 residues: 3-hydroxyacyl-[acyl-carrier-protein] dehydratase FabZ (141 aa).

His49 is a catalytic residue.

It belongs to the thioester dehydratase family. FabZ subfamily.

The protein resides in the cytoplasm. It carries out the reaction a (3R)-hydroxyacyl-[ACP] = a (2E)-enoyl-[ACP] + H2O. In terms of biological role, involved in unsaturated fatty acids biosynthesis. Catalyzes the dehydration of short chain beta-hydroxyacyl-ACPs and long chain saturated and unsaturated beta-hydroxyacyl-ACPs. This chain is 3-hydroxyacyl-[acyl-carrier-protein] dehydratase FabZ, found in Fusobacterium nucleatum subsp. nucleatum (strain ATCC 25586 / DSM 15643 / BCRC 10681 / CIP 101130 / JCM 8532 / KCTC 2640 / LMG 13131 / VPI 4355).